We begin with the raw amino-acid sequence, 229 residues long: Adenylate kinase (229 aa).

10–15 contributes to the ATP binding site; that stretch reads GSGKGT. The interval 30-59 is NMP; that stretch reads ESGVIFREHISKGTELGKQAKSYIDKGELV. AMP-binding positions include Ser31, Arg36, 57-59, 84-87, and Gln91; these read ELV and GFPR. Residues 125–164 are LID; it reads GRRICKTNNNHPNNVSIDSIKPDGNNCRVCHGELIVRTDD. Arg126 contacts ATP. Arg161 and Arg173 together coordinate AMP. Asn209 is an ATP binding site.

This sequence belongs to the adenylate kinase family. As to quaternary structure, monomer.

The protein localises to the cytoplasm. It catalyses the reaction AMP + ATP = 2 ADP. Its pathway is purine metabolism; AMP biosynthesis via salvage pathway; AMP from ADP: step 1/1. In terms of biological role, catalyzes the reversible transfer of the terminal phosphate group between ATP and AMP. Plays an important role in cellular energy homeostasis and in adenine nucleotide metabolism. This is Adenylate kinase from Lawsonia intracellularis (strain PHE/MN1-00).